The chain runs to 1077 residues: Carbamoyl phosphate synthase large chain (1077 aa).

A carboxyphosphate synthetic domain region spans residues 1-403; it reads MPKRTDIQSI…SLHKALRGLE (403 aa). Residues Arg129, Arg169, Gly175, Gly176, Glu208, Leu210, Glu215, Gly241, Ile242, His243, Gln285, and Glu299 each coordinate ATP. An ATP-grasp 1 domain is found at 133–328; sequence DKAMKSIGLE…IAKIAAKLAV (196 aa). Mg(2+) contacts are provided by Gln285, Glu299, and Asn301. Mn(2+) is bound by residues Gln285, Glu299, and Asn301. The oligomerization domain stretch occupies residues 404–553; that stretch reads VGATGFDEMV…YSSYDEECEA (150 aa). Residues 554–935 form a carbamoyl phosphate synthetic domain region; it reads NPTDKDKIMV…AYAKAELGCG (382 aa). In terms of domain architecture, ATP-grasp 2 spans 678–869; the sequence is QAAVERLGLL…LAKIAARVMA (192 aa). ATP is bound by residues Arg714, Arg753, Leu755, Glu760, Gly785, Val786, His787, Ser788, Gln828, and Glu840. Gln828, Glu840, and Asn842 together coordinate Mg(2+). 3 residues coordinate Mn(2+): Gln828, Glu840, and Asn842. Positions 936–1077 constitute an MGS-like domain; the sequence is SVYPEGGRAL…HAKVKASLEA (142 aa). The allosteric domain stretch occupies residues 936–1077; the sequence is SVYPEGGRAL…HAKVKASLEA (142 aa).

This sequence belongs to the CarB family. In terms of assembly, composed of two chains; the small (or glutamine) chain promotes the hydrolysis of glutamine to ammonia, which is used by the large (or ammonia) chain to synthesize carbamoyl phosphate. Tetramer of heterodimers (alpha,beta)4. Requires Mg(2+) as cofactor. The cofactor is Mn(2+).

The catalysed reaction is hydrogencarbonate + L-glutamine + 2 ATP + H2O = carbamoyl phosphate + L-glutamate + 2 ADP + phosphate + 2 H(+). The enzyme catalyses hydrogencarbonate + NH4(+) + 2 ATP = carbamoyl phosphate + 2 ADP + phosphate + 2 H(+). It functions in the pathway amino-acid biosynthesis; L-arginine biosynthesis; carbamoyl phosphate from bicarbonate: step 1/1. It participates in pyrimidine metabolism; UMP biosynthesis via de novo pathway; (S)-dihydroorotate from bicarbonate: step 1/3. In terms of biological role, large subunit of the glutamine-dependent carbamoyl phosphate synthetase (CPSase). CPSase catalyzes the formation of carbamoyl phosphate from the ammonia moiety of glutamine, carbonate, and phosphate donated by ATP, constituting the first step of 2 biosynthetic pathways, one leading to arginine and/or urea and the other to pyrimidine nucleotides. The large subunit (synthetase) binds the substrates ammonia (free or transferred from glutamine from the small subunit), hydrogencarbonate and ATP and carries out an ATP-coupled ligase reaction, activating hydrogencarbonate by forming carboxy phosphate which reacts with ammonia to form carbamoyl phosphate. This chain is Carbamoyl phosphate synthase large chain, found in Vibrio parahaemolyticus serotype O3:K6 (strain RIMD 2210633).